Here is a 103-residue protein sequence, read N- to C-terminus: Small ribosomal subunit protein uS10 (103 aa).

It belongs to the universal ribosomal protein uS10 family. As to quaternary structure, part of the 30S ribosomal subunit.

In terms of biological role, involved in the binding of tRNA to the ribosomes. This chain is Small ribosomal subunit protein uS10, found in Acetivibrio thermocellus (strain ATCC 27405 / DSM 1237 / JCM 9322 / NBRC 103400 / NCIMB 10682 / NRRL B-4536 / VPI 7372) (Clostridium thermocellum).